A 522-amino-acid polypeptide reads, in one-letter code: MKMLNSVSGSFRKKAGDSRSRECRTRLERRIVGATNRWRFPQDHFCGDLLALSQMCNVLNVDLDEALKNPDRLCISKFQKLFSENIMNSGTQSGEADVILECLGFKWELHHPQIFQSGTLAKLYLTALIQNMKSSQRELDKVQKAHPSGKIKKRSPVKKIIISMRINDPAVTRVAFALALKNLYMKEVEMTVDNVLGVLASAHILQFNRLFQKCVNMMMNRLAPSTIKNFYLAGCKYEEEQLTMACEKWLAMNLVPLVGTQIHLRQIPEPLLYKVLKSPRLFTFSEFHLLKTLLMWVYLQMNCKVQMVPIHETILAFFNSFPKKCCFLEQDPGQNWMPLFLCLRLHGITSGKDLEVLKHINFFPESWLVRVTANHYHALESGGNMVHLKDLSTQAMRFGLLFRQEYTTYSERISIYGYFFEIKGIKHDPTSYSFSMQRIKHTDLECPSPVCEHSTISLRSERLVKYEIQAQTLVDGRWQEFRTNQIMQKFGFIKPGCKSHVLKIQTVGIPIYASFAFIFPAS.

Positions 166-222 (INDPAVTRVAFALALKNLYMKEVEMTVDNVLGVLASAHILQFNRLFQKCVNMMMNRL) constitute a BTB domain.

The chain is BTB/POZ domain-containing protein 16 (Btbd16) from Mus musculus (Mouse).